We begin with the raw amino-acid sequence, 445 residues long: tRNA-2-methylthio-N(6)-dimethylallyladenosine synthase (445 aa).

In terms of domain architecture, MTTase N-terminal spans 9 to 125; the sequence is LKYRILTYGC…LPYLIARAKE (117 aa). [4Fe-4S] cluster-binding residues include Cys18, Cys54, Cys88, Cys162, Cys166, and Cys169. A Radical SAM core domain is found at 148 to 378; the sequence is RKPGLSAFVN…NRRQYQIATE (231 aa). One can recognise a TRAM domain in the interval 381–444; sequence QELQGSIQEV…TFSLFGEIFN (64 aa).

This sequence belongs to the methylthiotransferase family. MiaB subfamily. Monomer. The cofactor is [4Fe-4S] cluster.

The protein resides in the cytoplasm. It carries out the reaction N(6)-dimethylallyladenosine(37) in tRNA + (sulfur carrier)-SH + AH2 + 2 S-adenosyl-L-methionine = 2-methylsulfanyl-N(6)-dimethylallyladenosine(37) in tRNA + (sulfur carrier)-H + 5'-deoxyadenosine + L-methionine + A + S-adenosyl-L-homocysteine + 2 H(+). Functionally, catalyzes the methylthiolation of N6-(dimethylallyl)adenosine (i(6)A), leading to the formation of 2-methylthio-N6-(dimethylallyl)adenosine (ms(2)i(6)A) at position 37 in tRNAs that read codons beginning with uridine. This chain is tRNA-2-methylthio-N(6)-dimethylallyladenosine synthase, found in Syntrophomonas wolfei subsp. wolfei (strain DSM 2245B / Goettingen).